A 459-amino-acid chain; its full sequence is Trichothecene 3-O-acetyltransferase TRI101 (459 aa).

Asp-218 and Ile-221 together coordinate Ca(2+). Residues Lys-253, 266 to 269 (FVST), Asp-302, Gln-318, and Arg-343 contribute to the CoA site. Position 376 (Asp-376) interacts with Ca(2+). The CoA site is built by Ser-386 and Lys-390. Glu-449 contacts Ca(2+).

The protein belongs to the trichothecene 3-O-acetyltransferase family.

It participates in sesquiterpene biosynthesis; trichothecene biosynthesis. Functionally, 3-O-acetyltransferase involved in the biosynthesis of trichothecenes, a very large family of chemically related bicyclic sesquiterpene compounds acting as mycotoxins, including T2-toxin. The biosynthesis of trichothecenes begins with the cyclization of farnesyl diphosphate to trichodiene and is catalyzed by the trichodiene synthase TRI5. Trichodiene undergoes a series of oxygenations catalyzed by the cytochrome P450 monooxygenase TRI4. TRI4 controls the addition of four oxygens at C-2, C-3, C-11, and the C-12, C-13-epoxide to form the intermediate isotrichotriol. Isotrichotriol then undergoes a non-enzymatic isomerization and cyclization to form isotrichodermol. During this process, the oxygen at the C-2 position becomes the pyran ring oxygen and the hydroxyl group at C-11 is lost. More complex type A trichothecenes are built by modifying isotrichodermol through a series of paired hydroxylation and acetylation or acylation steps. Isotrichodermol is converted to isotrichodermin by the acetyltransferase TRI101. TRI101 encodes a C-3 transacetylase that acts as a self-protection or resistance factor during biosynthesis and that the presence of a free C-3 hydroxyl group is a key component of Fusarium trichothecene phytotoxicity. A second hydroxyl group is added to C-15 by the trichothecene C-15 hydroxylase TRI11, producing 15-decalonectrin, which is then acetylated by TRI3, producing calonectrin. A third hydroxyl group is added at C-4 by the cytochrome P450 monooxygenase TRI13, converting calonectrin to 3,15-diacetoxyspirpenol, which is subsequently acetylated bythe acetyltransferase TRI7. A fourth hydroxyl group is added to C-8 by the cytochrome P450 monooxygenase TRI1, followed by the addition of an isovaleryl moiety by TRI16. Finally, the acetyl group is removed from the C-3 position by the trichothecene C-3 esterase TRI8 to produce T-2 toxin. The chain is Trichothecene 3-O-acetyltransferase TRI101 from Fusarium sporotrichioides.